The chain runs to 115 residues: Probable 4-amino-4-deoxy-L-arabinose-phosphoundecaprenol flippase subunit ArnE (115 aa).

3 consecutive transmembrane segments (helical) span residues 42–62 (PWPW…LLLL), 65–85 (VEVG…TLVA), and 93–112 (VDRR…ALLG). The EamA domain occupies 46–113 (LALLALGLGL…IVAGVALLGR (68 aa)).

The protein belongs to the ArnE family. Heterodimer of ArnE and ArnF.

It localises to the cell inner membrane. It participates in bacterial outer membrane biogenesis; lipopolysaccharide biosynthesis. Its function is as follows. Translocates 4-amino-4-deoxy-L-arabinose-phosphoundecaprenol (alpha-L-Ara4N-phosphoundecaprenol) from the cytoplasmic to the periplasmic side of the inner membrane. The protein is Probable 4-amino-4-deoxy-L-arabinose-phosphoundecaprenol flippase subunit ArnE of Pseudomonas paraeruginosa (strain DSM 24068 / PA7) (Pseudomonas aeruginosa (strain PA7)).